Here is a 753-residue protein sequence, read N- to C-terminus: 5-methyltetrahydropteroyltriglutamate--homocysteine methyltransferase (753 aa).

Residues 17-20 (RELK) and K117 contribute to the 5-methyltetrahydropteroyltri-L-glutamate site. L-homocysteine-binding positions include 431 to 433 (IGS) and E484. L-methionine is bound by residues 431 to 433 (IGS) and E484. Residues 515–516 (RC) and W561 contribute to the 5-methyltetrahydropteroyltri-L-glutamate site. D599 provides a ligand contact to L-homocysteine. An L-methionine-binding site is contributed by D599. Position 605 (E605) interacts with 5-methyltetrahydropteroyltri-L-glutamate. Residues H641, C643, and E665 each contribute to the Zn(2+) site. H694 acts as the Proton donor in catalysis. A Zn(2+)-binding site is contributed by C726.

Belongs to the vitamin-B12 independent methionine synthase family. Zn(2+) serves as cofactor.

It catalyses the reaction 5-methyltetrahydropteroyltri-L-glutamate + L-homocysteine = tetrahydropteroyltri-L-glutamate + L-methionine. Its pathway is amino-acid biosynthesis; L-methionine biosynthesis via de novo pathway; L-methionine from L-homocysteine (MetE route): step 1/1. In terms of biological role, catalyzes the transfer of a methyl group from 5-methyltetrahydrofolate to homocysteine resulting in methionine formation. The polypeptide is 5-methyltetrahydropteroyltriglutamate--homocysteine methyltransferase (Escherichia coli O139:H28 (strain E24377A / ETEC)).